The following is a 352-amino-acid chain: Photosystem II D2 protein 2 (352 aa).

The chain crosses the membrane as a helical span at residues 40 to 60; the sequence is CAYLALGGWLTGTSFVTSWYT. A chlorophyll a-binding site is contributed by histidine 117. A helical transmembrane segment spans residues 124 to 140; it reads GFMLRQFEIARLVGVRP. Positions 129 and 142 each coordinate pheophytin a. Residues 152–165 traverse the membrane as a helical segment; the sequence is VFVSVFLMYPLGQS. Residue histidine 197 coordinates chlorophyll a. Residues 207 to 227 form a helical membrane-spanning segment; sequence GALLCAIHGATVENTLFEDSE. 2 residues coordinate a plastoquinone: histidine 214 and phenylalanine 261. Histidine 214 is a binding site for Fe cation. Histidine 268 lines the Fe cation pocket. The chain crosses the membrane as a helical span at residues 278 to 294; that stretch reads GLWMSSIGIVGLALNLR.

This sequence belongs to the reaction center PufL/M/PsbA/D family. PSII is composed of 1 copy each of membrane proteins PsbA, PsbB, PsbC, PsbD, PsbE, PsbF, PsbH, PsbI, PsbJ, PsbK, PsbL, PsbM, PsbT, PsbX, PsbY, PsbZ, Psb30/Ycf12, peripheral proteins PsbO, CyanoQ (PsbQ), PsbU, PsbV and a large number of cofactors. It forms dimeric complexes. It depends on The D1/D2 heterodimer binds P680, chlorophylls that are the primary electron donor of PSII, and subsequent electron acceptors. It shares a non-heme iron and each subunit binds pheophytin, quinone, additional chlorophylls, carotenoids and lipids. There is also a Cl(-1) ion associated with D1 and D2, which is required for oxygen evolution. The PSII complex binds additional chlorophylls, carotenoids and specific lipids. as a cofactor.

It localises to the cellular thylakoid membrane. The enzyme catalyses 2 a plastoquinone + 4 hnu + 2 H2O = 2 a plastoquinol + O2. Photosystem II (PSII) is a light-driven water:plastoquinone oxidoreductase that uses light energy to abstract electrons from H(2)O, generating O(2) and a proton gradient subsequently used for ATP formation. It consists of a core antenna complex that captures photons, and an electron transfer chain that converts photonic excitation into a charge separation. The D1/D2 (PsbA/PsbD) reaction center heterodimer binds P680, the primary electron donor of PSII as well as several subsequent electron acceptors. D2 is needed for assembly of a stable PSII complex. The sequence is that of Photosystem II D2 protein 2 from Synechococcus sp. (strain ATCC 27144 / PCC 6301 / SAUG 1402/1) (Anacystis nidulans).